The following is a 221-amino-acid chain: Probable transaldolase (221 aa).

The Schiff-base intermediate with substrate role is filled by Lys87.

This sequence belongs to the transaldolase family. Type 3B subfamily.

The protein resides in the cytoplasm. The enzyme catalyses D-sedoheptulose 7-phosphate + D-glyceraldehyde 3-phosphate = D-erythrose 4-phosphate + beta-D-fructose 6-phosphate. The protein operates within carbohydrate degradation; pentose phosphate pathway; D-glyceraldehyde 3-phosphate and beta-D-fructose 6-phosphate from D-ribose 5-phosphate and D-xylulose 5-phosphate (non-oxidative stage): step 2/3. Functionally, transaldolase is important for the balance of metabolites in the pentose-phosphate pathway. The polypeptide is Probable transaldolase (Syntrophobacter fumaroxidans (strain DSM 10017 / MPOB)).